We begin with the raw amino-acid sequence, 130 residues long: Small ribosomal subunit protein uS8 (130 aa).

The protein belongs to the universal ribosomal protein uS8 family. Part of the 30S ribosomal subunit. Contacts proteins S5 and S12.

Its function is as follows. One of the primary rRNA binding proteins, it binds directly to 16S rRNA central domain where it helps coordinate assembly of the platform of the 30S subunit. In Shewanella piezotolerans (strain WP3 / JCM 13877), this protein is Small ribosomal subunit protein uS8.